We begin with the raw amino-acid sequence, 275 residues long: NADPH-dependent 7-cyano-7-deazaguanine reductase (275 aa).

A substrate-binding site is contributed by 81 to 83 (IES). 83–84 (SK) contacts NADPH. C181 functions as the Thioimide intermediate in the catalytic mechanism. The Proton donor role is filled by D188. Position 220–221 (220–221 (HE)) interacts with substrate. Residue 249-250 (RG) coordinates NADPH.

The protein belongs to the GTP cyclohydrolase I family. QueF type 2 subfamily. As to quaternary structure, homodimer.

Its subcellular location is the cytoplasm. It carries out the reaction 7-aminomethyl-7-carbaguanine + 2 NADP(+) = 7-cyano-7-deazaguanine + 2 NADPH + 3 H(+). Its pathway is tRNA modification; tRNA-queuosine biosynthesis. In terms of biological role, catalyzes the NADPH-dependent reduction of 7-cyano-7-deazaguanine (preQ0) to 7-aminomethyl-7-deazaguanine (preQ1). This Xylella fastidiosa (strain 9a5c) protein is NADPH-dependent 7-cyano-7-deazaguanine reductase.